The following is a 160-amino-acid chain: Cytochrome b6-f complex subunit 4 (160 aa).

3 helical membrane-spanning segments follow: residues 36–56 (LLYI…GLSV), 95–115 (LLGV…PFIE), and 131–151 (TVFL…TFPI).

Belongs to the cytochrome b family. PetD subfamily. As to quaternary structure, the 4 large subunits of the cytochrome b6-f complex are cytochrome b6, subunit IV (17 kDa polypeptide, petD), cytochrome f and the Rieske protein, while the 4 small subunits are petG, petL, petM and petN. The complex functions as a dimer.

The protein localises to the plastid. It is found in the chloroplast thylakoid membrane. Functionally, component of the cytochrome b6-f complex, which mediates electron transfer between photosystem II (PSII) and photosystem I (PSI), cyclic electron flow around PSI, and state transitions. The protein is Cytochrome b6-f complex subunit 4 of Stigeoclonium helveticum (Green alga).